The primary structure comprises 286 residues: Protein N-terminal amidase (286 aa).

The CN hydrolase domain maps to 1 to 286 (MKFGCVQFFP…NGIVVGELEK (286 aa)). Catalysis depends on glutamate 43, which acts as the Proton acceptor. The active-site Proton donor is the lysine 121. Cysteine 155 functions as the Nucleophile in the catalytic mechanism.

The protein belongs to the carbon-nitrogen hydrolase superfamily.

Its subcellular location is the cytoplasm. The protein resides in the nucleus. In terms of biological role, deamidates N-terminal Asn and Gln. Component of a targeting complex in the N-end rule pathway. The polypeptide is Protein N-terminal amidase (nta1) (Schizosaccharomyces pombe (strain 972 / ATCC 24843) (Fission yeast)).